The sequence spans 1102 residues: Putative ISWI chromatin-remodeling complex subunit YPL216W (1102 aa).

In terms of domain architecture, WAC spans 23–131 (ETPWVIKESS…DTVCLKTIQK (109 aa)). The interval 271–301 (ELYTPLTIPPESDVEPADWKETSETSETSET) is disordered. Positions 375-435 (QFPTERLLVV…FLKTYNSKGS (61 aa)) constitute a DDT domain. Positions 673-743 (CNGIRLKLDS…EDIAFLEAKL (71 aa)) form a coiled coil.

The protein localises to the nucleus. May be required for the activity of an ISWI chromatin-remodeling complex. The polypeptide is Putative ISWI chromatin-remodeling complex subunit YPL216W (Saccharomyces cerevisiae (strain ATCC 204508 / S288c) (Baker's yeast)).